A 376-amino-acid polypeptide reads, in one-letter code: Penicillin V acylase (376 aa).

The signal sequence occupies residues 1 to 29 (MIKNNKRIKSTVCALSLVALTLGSAVSLA). Cysteine 30 serves as the catalytic Nucleophile.

Belongs to the peptidase C59 family. Homotetramer. Dimer of dimers.

It localises to the periplasm. It carries out the reaction a penicillin + H2O = 6-aminopenicillanate + a carboxylate. Its activity is regulated as follows. Exhibits uncharacteristic kinetic behavior, showing positive cooperativity coupled with substrate inhibition. Penicillin acylase activity is enhanced in the presence of the reducing agent DTT, indicating active sulfhydryl group in the enzyme. Also shows enhanced activity in presence of organic solvents and detergents. Inhibited largely in presence of Ag(+), Hg(2+) and Cd(2+) ions, which have strong affinities for sulfhydryl groups. Activity is also inhibited by bile salts. Catalyzes the hydrolysis of penicillin V to 6-aminopenicillanate (6-APA). Shows high specificity towards penicillin V. Can use other beta-lactam substrates, including penicillin G, ampicillin, cephalexin, cloxacillin and dicloxacillin, but at a rate less than 10% of that of penicillin V. Does not show any activity with glyco- or tauro-conjugated bile salts. This Pectobacterium atrosepticum (strain SCRI 1043 / ATCC BAA-672) (Erwinia carotovora subsp. atroseptica) protein is Penicillin V acylase.